Consider the following 85-residue polypeptide: U4-theraphotoxin-Hhn1a (85 aa).

The first 22 residues, 1 to 22 (MKMTLIAILTCAAVLVLHTTAA), serve as a signal peptide directing secretion. The propeptide occupies 23–48 (EELEAESQLMEVGMPDTELAAVDEER). 3 cysteine pairs are disulfide-bonded: Cys52/Cys66, Cys56/Cys77, and Cys71/Cys82.

This sequence belongs to the neurotoxin 12 (Hwtx-2) family. 02 (Hwtx-2) subfamily. In terms of assembly, monomer. As to expression, expressed by the venom gland.

The protein resides in the secreted. Neurotoxin active on both insects and mammals. This is U4-theraphotoxin-Hhn1a from Cyriopagopus hainanus (Chinese bird spider).